The chain runs to 638 residues: Zinc finger and BTB domain-containing protein 22 (638 aa).

Residues 57 to 121 (CDVSIRVQGR…AYTGRLSMAA (65 aa)) form the BTB domain. Disordered stretches follow at residues 171 to 223 (CASV…STSQ), 229 to 248 (SAAG…APVV), 335 to 354 (DDED…GEPE), and 367 to 451 (EPAD…HGAV). A compositionally biased stretch (polar residues) spans 189-210 (SVRSHTSSRASENQSPSSSNYF). Residue S203 is modified to Phosphoserine. Residues 483-504 (FLCHCGKAFSHKSMRDRHVNMH) form a C2H2-type 1; atypical zinc finger. C2H2-type zinc fingers lie at residues 510 to 532 (FDCP…MKTH) and 538 to 559 (YECS…HRGH). A disordered region spans residues 564-638 (HRMGVGGVGS…DFSGGGGAAH (75 aa)).

Belongs to the krueppel C2H2-type zinc-finger protein family.

It localises to the nucleus. Functionally, may be involved in transcriptional regulation. The chain is Zinc finger and BTB domain-containing protein 22 (Zbtb22) from Mus musculus (Mouse).